Here is a 94-residue protein sequence, read N- to C-terminus: MPVIAGGILAALLLLIVVVLCLYFKIHNALKAAKEPEAVAVKNHNPDKVWWAKNSQAKTIATESCPALQCCEGYRMCASFDSLPPCCCDINEGL.

Positions 1–21 (MPVIAGGILAALLLLIVVVLC) are cleaved as a signal peptide.

Belongs to the FAM24 family.

Its subcellular location is the secreted. The polypeptide is Protein FAM24B (FAM24B) (Homo sapiens (Human)).